The following is a 201-amino-acid chain: Holliday junction branch migration complex subunit RuvA (201 aa).

The segment at 1-64 (MYAYIRGKLT…EDAQLLYGFI (64 aa)) is domain I. Positions 65 to 143 (NEEEKDMFLS…ITRETTETLL (79 aa)) are domain II. The tract at residues 144-150 (SMNEENS) is flexible linker. A domain III region spans residues 151-201 (NSENLVKEALLALEALGYSKREISKVEKVLNKSTFDSVDEAVKLGLKTLVS).

The protein belongs to the RuvA family. In terms of assembly, homotetramer. Forms an RuvA(8)-RuvB(12)-Holliday junction (HJ) complex. HJ DNA is sandwiched between 2 RuvA tetramers; dsDNA enters through RuvA and exits via RuvB. An RuvB hexamer assembles on each DNA strand where it exits the tetramer. Each RuvB hexamer is contacted by two RuvA subunits (via domain III) on 2 adjacent RuvB subunits; this complex drives branch migration. In the full resolvosome a probable DNA-RuvA(4)-RuvB(12)-RuvC(2) complex forms which resolves the HJ.

It localises to the cytoplasm. In terms of biological role, the RuvA-RuvB-RuvC complex processes Holliday junction (HJ) DNA during genetic recombination and DNA repair, while the RuvA-RuvB complex plays an important role in the rescue of blocked DNA replication forks via replication fork reversal (RFR). RuvA specifically binds to HJ cruciform DNA, conferring on it an open structure. The RuvB hexamer acts as an ATP-dependent pump, pulling dsDNA into and through the RuvAB complex. HJ branch migration allows RuvC to scan DNA until it finds its consensus sequence, where it cleaves and resolves the cruciform DNA. The polypeptide is Holliday junction branch migration complex subunit RuvA (Staphylococcus haemolyticus (strain JCSC1435)).